The sequence spans 128 residues: Protein Wnt-2b-B (128 aa).

2 disulfides stabilise this stretch: cysteine 3–cysteine 16 and cysteine 5–cysteine 11. Serine 8 carries O-palmitoleoyl serine; by PORCN lipidation. Asparagine 48 carries N-linked (GlcNAc...) asparagine glycosylation. 2 cysteine pairs are disulfide-bonded: cysteine 90–cysteine 105 and cysteine 127–cysteine 128.

The protein belongs to the Wnt family. Palmitoleoylation is required for efficient binding to frizzled receptors. Depalmitoleoylation leads to Wnt signaling pathway inhibition.

The protein localises to the secreted. It is found in the extracellular space. It localises to the extracellular matrix. In terms of biological role, ligand for members of the frizzled family of seven transmembrane receptors. Functions in the canonical Wnt/beta-catenin signaling pathway. The sequence is that of Protein Wnt-2b-B (wnt2b-b) from Xenopus laevis (African clawed frog).